Here is a 126-residue protein sequence, read N- to C-terminus: Bleomycin resistance protein (126 aa).

Residues 1–119 (MTDQATPNLP…DGTLLRLIQN (119 aa)) form the VOC domain.

Belongs to the bleomycin resistance protein family.

Functionally, binding protein with a strong affinity to the bleomycin family of antibiotics. Binds to CL990; an antimitotic-antibiotic compound. The polypeptide is Bleomycin resistance protein (ble) (Klebsiella pneumoniae).